Reading from the N-terminus, the 487-residue chain is ATP-dependent 6-phosphofructokinase (487 aa).

Residues glycine 107, 173 to 174 (RG), 198 to 201 (GDGT), and lysine 226 each bind ATP. Aspartate 199 contributes to the Mg(2+) binding site. Substrate contacts are provided by residues 227 to 229 (TID), 272 to 274 (MGR), and glutamate 325. Aspartate 229 (proton acceptor) is an active-site residue. ATP is bound at residue 341-343 (SGN). A substrate-binding site is contributed by 380 to 383 (YMIR). The short motif at 485–487 (AKL) is the Peroxisomal targeting signal element.

It belongs to the phosphofructokinase type A (PFKA) family. PPi-dependent PFK group II subfamily. Atypical ATP-dependent clade 'X' sub-subfamily. Homotetramer. Mg(2+) is required as a cofactor.

The protein localises to the glycosome. It catalyses the reaction beta-D-fructose 6-phosphate + ATP = beta-D-fructose 1,6-bisphosphate + ADP + H(+). The protein operates within carbohydrate degradation; glycolysis; D-glyceraldehyde 3-phosphate and glycerone phosphate from D-glucose: step 3/4. With respect to regulation, allosterically activated by AMP. Catalyzes the phosphorylation of D-fructose 6-phosphate to fructose 1,6-bisphosphate by ATP, the first committing step of glycolysis. This Trypanosoma brucei brucei protein is ATP-dependent 6-phosphofructokinase.